Here is a 340-residue protein sequence, read N- to C-terminus: tRNA N6-adenosine threonylcarbamoyltransferase (340 aa).

2 residues coordinate Fe cation: H109 and H113. Substrate is bound by residues 132–136, D165, G178, and N277; that span reads AISGA. D302 is a Fe cation binding site.

This sequence belongs to the KAE1 / TsaD family. The cofactor is Fe(2+).

It localises to the cytoplasm. It catalyses the reaction L-threonylcarbamoyladenylate + adenosine(37) in tRNA = N(6)-L-threonylcarbamoyladenosine(37) in tRNA + AMP + H(+). Functionally, required for the formation of a threonylcarbamoyl group on adenosine at position 37 (t(6)A37) in tRNAs that read codons beginning with adenine. Is involved in the transfer of the threonylcarbamoyl moiety of threonylcarbamoyl-AMP (TC-AMP) to the N6 group of A37, together with TsaE and TsaB. TsaD likely plays a direct catalytic role in this reaction. The sequence is that of tRNA N6-adenosine threonylcarbamoyltransferase from Chlamydia muridarum (strain MoPn / Nigg).